The sequence spans 222 residues: Sugar fermentation stimulation protein homolog (222 aa).

This sequence belongs to the SfsA family.

This Thermotoga petrophila (strain ATCC BAA-488 / DSM 13995 / JCM 10881 / RKU-1) protein is Sugar fermentation stimulation protein homolog.